The following is a 215-amino-acid chain: Orotate phosphoribosyltransferase (215 aa).

Position 26 (lysine 26) interacts with 5-phospho-alpha-D-ribose 1-diphosphate. 34–35 contacts orotate; the sequence is FF. 5-phospho-alpha-D-ribose 1-diphosphate is bound by residues 72–73, arginine 99, lysine 100, lysine 103, histidine 105, and 124–132; these read YK and DDVITAGTA. Residues threonine 128 and arginine 156 each contribute to the orotate site.

This sequence belongs to the purine/pyrimidine phosphoribosyltransferase family. PyrE subfamily. As to quaternary structure, homodimer. It depends on Mg(2+) as a cofactor.

The enzyme catalyses orotidine 5'-phosphate + diphosphate = orotate + 5-phospho-alpha-D-ribose 1-diphosphate. Its pathway is pyrimidine metabolism; UMP biosynthesis via de novo pathway; UMP from orotate: step 1/2. Its function is as follows. Catalyzes the transfer of a ribosyl phosphate group from 5-phosphoribose 1-diphosphate to orotate, leading to the formation of orotidine monophosphate (OMP). The polypeptide is Orotate phosphoribosyltransferase (Cellvibrio japonicus (strain Ueda107) (Pseudomonas fluorescens subsp. cellulosa)).